The following is a 178-amino-acid chain: Inner membrane-spanning protein YciB (178 aa).

5 helical membrane-spanning segments follow: residues 10 to 30, 47 to 67, 76 to 96, 121 to 141, and 151 to 171; these read IVLF…AVLM, LQTM…LTLA, WKPT…LWAL, WAWI…VLHW, and LWGY…IAPH.

Belongs to the YciB family.

It is found in the cell inner membrane. Functionally, plays a role in cell envelope biogenesis, maintenance of cell envelope integrity and membrane homeostasis. This is Inner membrane-spanning protein YciB from Verminephrobacter eiseniae (strain EF01-2).